We begin with the raw amino-acid sequence, 526 residues long: Lysine--tRNA ligase (526 aa).

Positions 30-38 (PSGYVHIGN) match the 'HIGH' region motif. Zn(2+) contacts are provided by Asp95, Cys99, His100, His106, Cys177, and Cys199. The 'KMSKS' region motif lies at 280–284 (KMSGS).

This sequence belongs to the class-I aminoacyl-tRNA synthetase family. Requires Zn(2+) as cofactor.

The protein resides in the cytoplasm. The enzyme catalyses tRNA(Lys) + L-lysine + ATP = L-lysyl-tRNA(Lys) + AMP + diphosphate. The chain is Lysine--tRNA ligase (lysS) from Thermococcus kodakarensis (strain ATCC BAA-918 / JCM 12380 / KOD1) (Pyrococcus kodakaraensis (strain KOD1)).